The chain runs to 179 residues: Large ribosomal subunit protein uL5 (179 aa).

It belongs to the universal ribosomal protein uL5 family. In terms of assembly, part of the 50S ribosomal subunit; part of the 5S rRNA/L5/L18/L25 subcomplex. Contacts the 5S rRNA and the P site tRNA. Forms a bridge to the 30S subunit in the 70S ribosome.

Functionally, this is one of the proteins that bind and probably mediate the attachment of the 5S RNA into the large ribosomal subunit, where it forms part of the central protuberance. In the 70S ribosome it contacts protein S13 of the 30S subunit (bridge B1b), connecting the 2 subunits; this bridge is implicated in subunit movement. Contacts the P site tRNA; the 5S rRNA and some of its associated proteins might help stabilize positioning of ribosome-bound tRNAs. This is Large ribosomal subunit protein uL5 from Nitratidesulfovibrio vulgaris (strain DSM 19637 / Miyazaki F) (Desulfovibrio vulgaris).